A 348-amino-acid polypeptide reads, in one-letter code: Ion-translocating oxidoreductase complex subunit D (348 aa).

The next 5 helical transmembrane spans lie at 19–39, 41–61, 66–86, 87–107, and 122–142; these read FMLWVIVAMLPALIVQIAFFG, GVVIQLAIALSMAIVIEIVVA, KSTTFYLADLAGVVTATILAM, AIPPYAPYWVVMIGMIVALLL, and PAMVAYAFLLISFPVQMTSWL. Threonine 186 is subject to FMN phosphoryl threonine. A run of 5 helical transmembrane segments spans residues 212-232, 236-256, 265-285, 291-311, and 315-335; these read IFARGWLQLNLAFLAGGLFLL, IIHWQIPVAMLVVFSVLSALT, LNVLSQLFSGAMMFGAFFIAT, SITPKGKLIFGGLIGLLAYLI, and GSYPDAIAFAVLLANLCVPLI.

This sequence belongs to the NqrB/RnfD family. The complex is composed of six subunits: RnfA, RnfB, RnfC, RnfD, RnfE and RnfG. It depends on FMN as a cofactor.

The protein resides in the cell inner membrane. Part of a membrane-bound complex that couples electron transfer with translocation of ions across the membrane. The polypeptide is Ion-translocating oxidoreductase complex subunit D (Haemophilus ducreyi (strain 35000HP / ATCC 700724)).